Reading from the N-terminus, the 244-residue chain is Octanoyltransferase (244 aa).

The region spanning 49–237 is the BPL/LPL catalytic domain; the sequence is VAPGNFLIFC…HLTALFELHI (189 aa). Substrate contacts are provided by residues 94–101, 167–169, and 180–182; these read RGGDITYH, AMG, and GFA. Catalysis depends on C198, which acts as the Acyl-thioester intermediate.

This sequence belongs to the LipB family.

It is found in the cytoplasm. The catalysed reaction is octanoyl-[ACP] + L-lysyl-[protein] = N(6)-octanoyl-L-lysyl-[protein] + holo-[ACP] + H(+). It functions in the pathway protein modification; protein lipoylation via endogenous pathway; protein N(6)-(lipoyl)lysine from octanoyl-[acyl-carrier-protein]: step 1/2. Functionally, catalyzes the transfer of endogenously produced octanoic acid from octanoyl-acyl-carrier-protein onto the lipoyl domains of lipoate-dependent enzymes. Lipoyl-ACP can also act as a substrate although octanoyl-ACP is likely to be the physiological substrate. The protein is Octanoyltransferase of Cytophaga hutchinsonii (strain ATCC 33406 / DSM 1761 / CIP 103989 / NBRC 15051 / NCIMB 9469 / D465).